A 37-amino-acid chain; its full sequence is Large ribosomal subunit protein bL36 (37 aa).

The protein belongs to the bacterial ribosomal protein bL36 family.

This Magnetococcus marinus (strain ATCC BAA-1437 / JCM 17883 / MC-1) protein is Large ribosomal subunit protein bL36.